Reading from the N-terminus, the 947-residue chain is Altered inheritance of mitochondria protein 3 (947 aa).

Disordered regions lie at residues 1-334 (MGFW…LLPQ), 354-810 (MSST…QDEV), and 824-904 (RKTN…KSLE). Residues 36 to 54 (ASKKHYNNSKARRERKSGK) are compositionally biased toward basic residues. A phosphoserine mark is found at serine 57, serine 58, and serine 64. The segment covering 59–69 (DEEYDSEDEME) has biased composition (acidic residues). A compositionally biased stretch (basic and acidic residues) spans 70–84 (YERKPTDIRSLKDPK). 2 stretches are compositionally biased toward low complexity: residues 93-105 (PGQKTYTGQQQQQ) and 130-163 (QSQYAQPQYNQYPQQQLQQGVMPQQQQLQQGVVP). Residues 177–255 (GSNSNATSYQ…YVSHGSTNLG (79 aa)) show a composition bias toward polar residues. 2 stretches are compositionally biased toward low complexity: residues 256–289 (QSQFPSGQQQQPTTQFGQQVLPSPAQPQQQQQGQ) and 313–334 (QQQQQQQQQQQPLNQNNALLPQ). Positions 354–367 (MSSTTNMQDSNPSY) are enriched in polar residues. Residues 379 to 395 (GGQPPVPVRMQPQPPQP) show a composition bias toward pro residues. Polar residues predominate over residues 466–475 (IQPNTTSSAA). Phosphoserine is present on serine 476. A compositionally biased stretch (basic and acidic residues) spans 488 to 502 (DNERNSGNKENDEST). The span at 633–644 (VPQSKPQSQSQF) shows a compositional bias: polar residues. Residues 667 to 676 (SQSSNSSDSS) are compositionally biased toward low complexity. Threonine 729 is subject to Phosphothreonine. Basic and acidic residues predominate over residues 749 to 759 (DSSKDANKYEK). The segment covering 763-774 (PVTSSIQAQQST) has biased composition (polar residues). Threonine 861 is modified (phosphothreonine). The span at 862 to 879 (PPRPPPSRSSPKKVPPVV) shows a compositional bias: pro residues. Over residues 888–899 (KKPPVVPKKKPL) the composition is skewed to basic residues.

This sequence belongs to the AIM3 family. In terms of assembly, interacts with RVS167.

The protein resides in the membrane raft. This Saccharomyces cerevisiae (strain ATCC 204508 / S288c) (Baker's yeast) protein is Altered inheritance of mitochondria protein 3 (AIM3).